Here is a 248-residue protein sequence, read N- to C-terminus: Adenosylcobinamide-GDP ribazoletransferase (248 aa).

A run of 7 helical transmembrane segments spans residues 32 to 52 (FPLV…IGMV), 60 to 80 (ALLV…DGLA), 103 to 123 (AVGS…WIAL), 134 to 154 (WIVS…SVMT), 170 to 190 (AGGW…VLVM), 195 to 215 (LPIV…GMLA), and 227 to 247 (LGAS…LLLF).

Belongs to the CobS family. It depends on Mg(2+) as a cofactor.

The protein resides in the cell inner membrane. It carries out the reaction alpha-ribazole + adenosylcob(III)inamide-GDP = adenosylcob(III)alamin + GMP + H(+). It catalyses the reaction alpha-ribazole 5'-phosphate + adenosylcob(III)inamide-GDP = adenosylcob(III)alamin 5'-phosphate + GMP + H(+). It participates in cofactor biosynthesis; adenosylcobalamin biosynthesis; adenosylcobalamin from cob(II)yrinate a,c-diamide: step 7/7. Its function is as follows. Joins adenosylcobinamide-GDP and alpha-ribazole to generate adenosylcobalamin (Ado-cobalamin). Also synthesizes adenosylcobalamin 5'-phosphate from adenosylcobinamide-GDP and alpha-ribazole 5'-phosphate. This Prosthecochloris aestuarii (strain DSM 271 / SK 413) protein is Adenosylcobinamide-GDP ribazoletransferase.